Reading from the N-terminus, the 239-residue chain is Transmembrane ascorbate ferrireductase 1 (239 aa).

The Cytoplasmic portion of the chain corresponds to 1 to 7 (MAVRINA). Residues 8-28 (MAVTFVAHALAVIAAIMVLVW) form a helical membrane-spanning segment. The 204-residue stretch at 13–216 (VAHALAVIAA…FGAFVVLTAS (204 aa)) folds into the Cytochrome b561 domain. The Lumenal segment spans residues 29-45 (SISYRGGLAWEATNKNL). A helical membrane pass occupies residues 46-66 (IFNLHPVLMLIGFIILGGEAI). Heme b is bound at residue His-50. The Cytoplasmic portion of the chain corresponds to 67–81 (ISYKSLPLEKPVKKL). The chain crosses the membrane as a helical span at residues 82–102 (IHLILHAIALALGIFGICAAF). Heme b contacts are provided by His-83 and His-117. Over 103 to 119 (KNHNESHIPNLYSLHSW) the chain is Lumenal. Residues 120 to 140 (IGIGVISLYGFQWVYSFIVFF) traverse the membrane as a helical segment. At 141 to 155 (FPGGSTNLKSGLLPW) the chain is on the cytoplasmic side. His-156 provides a ligand contact to heme b. Residues 156–176 (HAMLGLFVYILAVGNAALGFL) form a helical membrane-spanning segment. Residues 177 to 193 (EKLTFLENGGLDKYGSE) lie on the Lumenal side of the membrane. The helical transmembrane segment at 194–214 (AFLINFTAIITILFGAFVVLT) threads the bilayer. Topologically, residues 215 to 239 (ASAESPSPSPSVSNDDSVDFSYSAI) are cytoplasmic. A disordered region spans residues 217–239 (AESPSPSPSVSNDDSVDFSYSAI). Residues 224–239 (PSVSNDDSVDFSYSAI) show a composition bias toward low complexity.

As to quaternary structure, homodimer. Heme b serves as cofactor. As to expression, expressed in roots, seedlings and leaves. Lower expression in flowers. Expressed in the L1 layer of the shoot apex, in the epidermis of leaf primordia and young leaves and in vascular bundles. In the differentiation zone of the root, detected in the pericycle and in the epidermis, but not in the cortex. Strongly expressed in the lateral part of the root cap and in the epidermis of the root tip, but not in the meristematic tissue. Not expressed in lateral roots. In mature embryos, expressed in the epidermis, cotyledon tips and root tips.

It localises to the vacuole membrane. It catalyses the reaction Fe(3+)(out) + L-ascorbate(in) = monodehydro-L-ascorbate radical(in) + Fe(2+)(out) + H(+). Two-heme-containing cytochrome. Catalyzes ascorbate-dependent trans-membrane ferric-chelate reduction. Able to use dihydrolipoic acid (DHLA) as an alternative substrate to ascorbate. In Arabidopsis thaliana (Mouse-ear cress), this protein is Transmembrane ascorbate ferrireductase 1 (CYB561A).